A 743-amino-acid polypeptide reads, in one-letter code: Putative metallophosphoesterase At3g03305 (743 aa).

Residues 1-40 form the signal peptide; that stretch reads MESIGDDDELRSKTVSLPRRISFTILLLLLLISLSTRVSG. A divalent metal cation contacts are provided by Asp66, His68, and Asp101. 5 consecutive transmembrane segments (helical) span residues 514 to 534, 565 to 585, 623 to 643, 687 to 704, and 716 to 736; these read ILWPALYSLFLVFLIPKCIII, MPVVWFGYMAYLFYLIFFPWF, VMVVVIPHVVFVVIPSVLVVC, LFRKSVLLASLALYWKHF, and MNVVHFPGYSLVVPLLLLYVI.

Belongs to the metallophosphoesterase superfamily. It depends on a divalent metal cation as a cofactor.

The protein resides in the membrane. The chain is Putative metallophosphoesterase At3g03305 from Arabidopsis thaliana (Mouse-ear cress).